A 392-amino-acid chain; its full sequence is Extracellular metalloproteinase 4 (392 aa).

A propeptide spanning residues V1 to S9 is cleaved from the precursor. Residues N27 and N176 are each glycosylated (N-linked (GlcNAc...) asparagine). A Zn(2+)-binding site is contributed by H193. Residue E194 is part of the active site. H197 lines the Zn(2+) pocket. 2 N-linked (GlcNAc...) asparagine glycosylation sites follow: N359 and N385.

This sequence belongs to the peptidase M36 family. Requires Zn(2+) as cofactor.

The protein resides in the secreted. Functionally, secreted metalloproteinase probably acting as a virulence factor. In Trichophyton violaceum, this protein is Extracellular metalloproteinase 4 (MEP4).